Consider the following 932-residue polypeptide: Beta-mannosidase A (932 aa).

Residues 1 to 19 (MRVPAQATIAVLASAVSSP) form the signal peptide. 9 N-linked (GlcNAc...) asparagine glycosylation sites follow: Asn41, Asn81, Asn94, Asn249, Asn261, Asn284, Asn289, Asn318, and Asn348. The active-site Proton donor is Glu480. N-linked (GlcNAc...) asparagine glycans are attached at residues Asn538, Asn551, Asn609, Asn624, Asn632, Asn659, Asn739, and Asn791.

The protein belongs to the glycosyl hydrolase 2 family. Beta-mannosidase A subfamily. Homodimer.

The protein localises to the secreted. The enzyme catalyses Hydrolysis of terminal, non-reducing beta-D-mannose residues in beta-D-mannosides.. It participates in glycan metabolism; N-glycan degradation. Exoglycosidase that cleaves the single beta-linked mannose residue from the non-reducing end of beta-mannosidic oligosaccharides of various complexity and length. Involved in the degradation of polymeric mannan and galactomannan. The chain is Beta-mannosidase A (mndA) from Aspergillus terreus (strain NIH 2624 / FGSC A1156).